The following is a 248-amino-acid chain: Uridylate kinase (248 aa).

Residue 15–18 participates in ATP binding; that stretch reads KLSG. Positions 23–28 are involved in allosteric activation by GTP; that stretch reads GAEGFG. UMP is bound at residue Gly57. The ATP site is built by Gly58 and Arg62. Residues Asp77 and 138 to 145 each bind UMP; that span reads TGNPFFTT. Residues Thr165, Tyr171, and Asp174 each coordinate ATP.

The protein belongs to the UMP kinase family. In terms of assembly, homohexamer.

It localises to the cytoplasm. The enzyme catalyses UMP + ATP = UDP + ADP. It functions in the pathway pyrimidine metabolism; CTP biosynthesis via de novo pathway; UDP from UMP (UMPK route): step 1/1. Allosterically activated by GTP. Inhibited by UTP. Functionally, catalyzes the reversible phosphorylation of UMP to UDP. This chain is Uridylate kinase, found in Yersinia enterocolitica serotype O:8 / biotype 1B (strain NCTC 13174 / 8081).